Here is a 185-residue protein sequence, read N- to C-terminus: Translation initiation factor IF-3, chloroplastic (185 aa).

It belongs to the IF-3 family. In terms of assembly, monomer.

The protein resides in the plastid. It is found in the chloroplast. In terms of biological role, IF-3 binds to the 30S ribosomal subunit and shifts the equilibrium between 70S ribosomes and their 50S and 30S subunits in favor of the free subunits, thus enhancing the availability of 30S subunits on which protein synthesis initiation begins. The chain is Translation initiation factor IF-3, chloroplastic from Cyanidium caldarium (Red alga).